A 627-amino-acid chain; its full sequence is (-)-beta-pinene synthase 1, chloroplastic (627 aa).

The transit peptide at 1–50 (MDLISVLPSTSKSCVCLHKPLSSSTHKLKPFCRTIRILGMPRPRKSVLMA) directs the protein to the chloroplast. Mg(2+)-binding residues include Asp378, Asp382, and Asp530. Positions 378-382 (DDMYD) match the DDXXD motif motif.

This sequence belongs to the terpene synthase family. Tpsd subfamily. Mg(2+) serves as cofactor. Mn(2+) is required as a cofactor.

It is found in the plastid. The protein resides in the chloroplast. The catalysed reaction is (2E)-geranyl diphosphate = (1S,5S)-beta-pinene + diphosphate. The enzyme catalyses (2E)-geranyl diphosphate = (1S,5S)-alpha-pinene + diphosphate. It participates in terpene metabolism; oleoresin biosynthesis. The protein operates within secondary metabolite biosynthesis; terpenoid biosynthesis. Its function is as follows. Monoterpene synthase (TPS) involved in the biosynthesis of monoterpene natural products included in conifer oleoresin secretions and volatile emissions; these compounds contribute to biotic and abiotic stress defense against herbivores and pathogens. Catalyzes the conversion of (2E)-geranyl diphosphate (GPP) to (-)-beta-pinene and, to a lower extent, to (-)-alpha-pinene. This chain is (-)-beta-pinene synthase 1, chloroplastic, found in Pinus contorta (Shore pine).